Reading from the N-terminus, the 161-residue chain is Cyclic pyranopterin monophosphate synthase (161 aa).

Substrate-binding positions include 78 to 80 (MCH) and 116 to 117 (ME). Residue Asp-131 is part of the active site.

It belongs to the MoaC family. Homohexamer; trimer of dimers.

The catalysed reaction is (8S)-3',8-cyclo-7,8-dihydroguanosine 5'-triphosphate = cyclic pyranopterin phosphate + diphosphate. The protein operates within cofactor biosynthesis; molybdopterin biosynthesis. In terms of biological role, catalyzes the conversion of (8S)-3',8-cyclo-7,8-dihydroguanosine 5'-triphosphate to cyclic pyranopterin monophosphate (cPMP). The polypeptide is Cyclic pyranopterin monophosphate synthase (Nitratidesulfovibrio vulgaris (strain ATCC 29579 / DSM 644 / CCUG 34227 / NCIMB 8303 / VKM B-1760 / Hildenborough) (Desulfovibrio vulgaris)).